The primary structure comprises 867 residues: Cilium assembly protein DZIP1 (867 aa).

The mediates interaction with PCM1 stretch occupies residues M12 to C203. Residues M12–L367 are mediates interaction with GLI3 and localization to the cilium basal body. Residues C154 to K278 form a required for interaction with DAZ1 region. The C2H2-type zinc finger occupies Y198 to H221. Phosphoserine; by PLK1 is present on S226. 3 coiled-coil regions span residues Y230 to I340, T401 to N445, and D568 to I588. The tract at residues P446–C617 is mediates interaction with GDI2 and RAB8A. 3 stretches are compositionally biased toward polar residues: residues L643–T654, K671–F680, and N708–K718. Disordered stretches follow at residues L643–N768 and S796–V867. The span at D722 to D733 shows a compositional bias: acidic residues. Residues S807–F823 are compositionally biased toward basic and acidic residues. The segment covering S848–T859 has biased composition (low complexity).

The protein belongs to the DZIP C2H2-type zinc-finger protein family. Interacts with DAZ1. Interacts with the BBSome; recruits the BBSome to centriolar satellites of the cilium. Interacts with PCM1; localizes DZIP1 and the associated BBSome to centriolar satellites. Interacts with RAB8A (GDP-bound inactive form); recruits RAB8A to the basal body of the cilium and prevents its inhibition by GDI2. Interacts with GDI2; negatively regulates the interaction of GDI2 with GDP-bound RAB8A. Interacts with GLI3; retains GLI3 within the cytoplasm. Interacts with CEP164. Interacts with IFT88. Phosphorylation at Ser-226 by PLK1 before mitosis prevents interaction with PCM1 and localization to centriolar satellites. Thereby, it negatively regulates the localization of the BBSome to centriolar satellites. In terms of tissue distribution, predominantly expressed in testis (at protein level). Also expressed in fetal brain, adult oocytes and ovary. Expressed in undifferentiated ES cells. In testis, it is specifically expressed in germ cells (at protein level). Expressed in mature germ cells and secondary spermatocytes, while it is weakly or not expressed in primary spermatocytes.

It localises to the cytoplasm. It is found in the cytoskeleton. The protein localises to the cilium basal body. The protein resides in the microtubule organizing center. Its subcellular location is the centrosome. It localises to the centriolar satellite. It is found in the centriole. The protein localises to the nucleus. The protein resides in the nucleus speckle. Molecular adapter that recruits protein complexes required for cilium assembly and function to the cilium basal body. At the exit of mitosis, localizes to the basal body and ciliary base of the forming primary cilium where it recruits and activates RAB8A to direct vesicle-mediated transport of proteins to the cilium. Also recruits the BBSome, a complex involved in cilium biogenesis, by bridging it to PCM1 at the centriolar satellites of the cilium. It is also required for the recruitment to the cilium basal body of the intraflagellar transport (IFT) machinery as well as the ciliary appendage proteins CEP164 and NINEIN. Functions as a regulator of Hedgehog signaling both through its role in cilium assembly but also probably through its ability to retain GLI3 within the cytoplasm. It is involved in spermatogenesis through its role in organization of the basal body and assembly of the sperm flagellum. Also indirectly involved in heart development through its function in ciliogenesis. The protein is Cilium assembly protein DZIP1 of Homo sapiens (Human).